The following is a 152-amino-acid chain: Small ribosomal subunit protein uS13z/uS13y/uS13x (152 aa).

S2 bears the N-acetylserine mark.

Belongs to the universal ribosomal protein uS13 family.

The protein resides in the cytoplasm. In terms of biological role, located at the top of the head of the 40S subunit, it contacts several helices of the 18S rRNA. The polypeptide is Small ribosomal subunit protein uS13z/uS13y/uS13x (RPS18A) (Arabidopsis thaliana (Mouse-ear cress)).